A 367-amino-acid polypeptide reads, in one-letter code: Adenosine deaminase (367 aa).

Residues histidine 46 and histidine 48 each contribute to the Zn(2+) site. A purine D-ribonucleoside is bound by residues 48 to 50 (HLD), aspartate 176, and glycine 205. A gating helix loop; regulates binding affinity for substrates and thus substrate selectivity region spans residues 174–188 (TGDGGLSHERMKEAA). A Zn(2+)-binding site is contributed by histidine 230. A purine D-ribonucleoside-binding residues include glutamate 233, histidine 257, and aspartate 314. Aspartate 314 provides a ligand contact to Zn(2+).

This sequence belongs to the metallo-dependent hydrolases superfamily. Adenosine and AMP deaminases family. It depends on Zn(2+) as a cofactor.

The enzyme catalyses adenosine + H2O + H(+) = inosine + NH4(+). The catalysed reaction is S-methyl-5'-thioadenosine + H2O + H(+) = S-methyl-5'-thioinosine + NH4(+). The protein operates within purine metabolism; purine nucleoside salvage. Inhibited by coformycin and methylthiocoformycin (MT-coformycin). Its function is as follows. Catalyzes the hydrolytic deamination of adenosine to produce inosine. Unlike mammalian adenosine deaminases, also catalyzes the deamination of 5'-methylthioadenosine (MTA), a by-product of polyamine biosynthesis, to produce 5'-methylthioinosine (MTI). Plays an essential role in the purine salvage pathway which allows the parasite to use host cell purines for the synthesis of nucleic acids. The polypeptide is Adenosine deaminase (Plasmodium falciparum (isolate 3D7)).